A 417-amino-acid polypeptide reads, in one-letter code: 3-isopropylmalate dehydratase large subunit 2 (417 aa).

Residues C298, C358, and C361 each coordinate [4Fe-4S] cluster.

It belongs to the aconitase/IPM isomerase family. LeuC type 2 subfamily. In terms of assembly, heterodimer of LeuC and LeuD. [4Fe-4S] cluster serves as cofactor.

It carries out the reaction (2R,3S)-3-isopropylmalate = (2S)-2-isopropylmalate. It participates in amino-acid biosynthesis; L-leucine biosynthesis; L-leucine from 3-methyl-2-oxobutanoate: step 2/4. Catalyzes the isomerization between 2-isopropylmalate and 3-isopropylmalate, via the formation of 2-isopropylmaleate. In Thermotoga maritima (strain ATCC 43589 / DSM 3109 / JCM 10099 / NBRC 100826 / MSB8), this protein is 3-isopropylmalate dehydratase large subunit 2.